Consider the following 243-residue polypeptide: MDGFGSSQAPAAYREVEWIADVFVIGMGIGWIINYVGMVYGSLKGRTYGMAIMPLCCNIAWEIVYGLIYPSKTLYEQGVFLSGLTINLGVIYTAIKFGPKEWTHAPLVMHNLPLIFMLGILGFLTGHLALAAEIGPALAYNWGAAFCQLLLSVGGLCQLISRGSTRGASYTLWLSRFLGSFSVVISAWLRYKYWPQAFSWLGKPLILWCLFAWLVVDGSYGVCFYYVKRYERRIGHDSDRKTV.

The next 7 helical transmembrane spans lie at 19-39 (IADV…VGMV), 48-68 (YGMA…YGLI), 78-98 (GVFL…IKFG), 112-132 (LPLI…ALAA), 134-154 (IGPA…LSVG), 169-189 (SYTL…SAWL), and 205-225 (LILW…VCFY).

The protein belongs to the paxB family.

The protein resides in the membrane. Functionally, terpene cyclase; part of the ATM2 gene cluster that mediates the biosynthesis of aflatrem, a tremorgenic mycotoxin with acute neurotoxic effects. Synthesis of geranylgeranyl diphosphate (GGPP) by AtmG (a GGPP synthase) precedes condensation of GGPP with indole 3-glycerol phosphate, followed by epoxidation and cyclization by AtmM (a FAD-dependent monooxygenase) and AtmC (a prenyltransferase) to produce paspaline. AtmB is also essential for paspaline production, but its exact role has not been identified yet. AtmP, a cytochrome P450 monooxygenase, subsequently converts paspaline to 13-desoxypaxilline via PC-M6 by removal of the C-30 methyl group and oxidation at C-10. AtmQ, a cytochrome P450 monooxygenase, then catalyzes the oxidation of 13-desoxypaxilline, first at C-7 to produce paspalicine and then at C-13 to form paspalinine. Finally, AtmD prenylates paspalinine to form aflatrem. The protein is Terpene cyclase atmB of Aspergillus flavus.